We begin with the raw amino-acid sequence, 180 residues long: ATP synthase subunit delta (180 aa).

The protein belongs to the ATPase delta chain family. In terms of assembly, F-type ATPases have 2 components, F(1) - the catalytic core - and F(0) - the membrane proton channel. F(1) has five subunits: alpha(3), beta(3), gamma(1), delta(1), epsilon(1). F(0) has three main subunits: a(1), b(2) and c(10-14). The alpha and beta chains form an alternating ring which encloses part of the gamma chain. F(1) is attached to F(0) by a central stalk formed by the gamma and epsilon chains, while a peripheral stalk is formed by the delta and b chains.

It localises to the cell membrane. Functionally, f(1)F(0) ATP synthase produces ATP from ADP in the presence of a proton or sodium gradient. F-type ATPases consist of two structural domains, F(1) containing the extramembraneous catalytic core and F(0) containing the membrane proton channel, linked together by a central stalk and a peripheral stalk. During catalysis, ATP synthesis in the catalytic domain of F(1) is coupled via a rotary mechanism of the central stalk subunits to proton translocation. Its function is as follows. This protein is part of the stalk that links CF(0) to CF(1). It either transmits conformational changes from CF(0) to CF(1) or is implicated in proton conduction. This Bacillus mycoides (strain KBAB4) (Bacillus weihenstephanensis) protein is ATP synthase subunit delta.